The sequence spans 411 residues: 2,3-bisphosphoglycerate-independent phosphoglycerate mutase 1 (411 aa).

Belongs to the BPG-independent phosphoglycerate mutase family. A-PGAM subfamily. As to quaternary structure, homotetramer. It depends on Mg(2+) as a cofactor.

It carries out the reaction (2R)-2-phosphoglycerate = (2R)-3-phosphoglycerate. Its pathway is carbohydrate degradation; glycolysis; pyruvate from D-glyceraldehyde 3-phosphate: step 3/5. With respect to regulation, inhibited to approximately 20% by EDTA. In terms of biological role, catalyzes the interconversion of 2-phosphoglycerate and 3-phosphoglycerate. The polypeptide is 2,3-bisphosphoglycerate-independent phosphoglycerate mutase 1 (apgM1) (Methanocaldococcus jannaschii (strain ATCC 43067 / DSM 2661 / JAL-1 / JCM 10045 / NBRC 100440) (Methanococcus jannaschii)).